The primary structure comprises 365 residues: Carboxynorspermidine/carboxyspermidine decarboxylase (365 aa).

The residue at position 37 (Lys37) is an N6-(pyridoxal phosphate)lysine. Substrate-binding residues include Glu233 and Asp269.

Belongs to the Orn/Lys/Arg decarboxylase class-II family. NspC subfamily. As to quaternary structure, homodimer. The cofactor is pyridoxal 5'-phosphate.

The protein localises to the cytoplasm. It catalyses the reaction carboxynorspermidine + H(+) = norspermidine + CO2. The catalysed reaction is carboxyspermidine + H(+) = spermidine + CO2. In terms of biological role, catalyzes the decarboxylation of carboxynorspermidine and carboxyspermidine. The sequence is that of Carboxynorspermidine/carboxyspermidine decarboxylase from Herminiimonas arsenicoxydans.